We begin with the raw amino-acid sequence, 496 residues long: Germacrene A hydroxylase (496 aa).

The Cytoplasmic segment spans residues 1–2 (ME). Residues 3–23 (LTLTTSLGLAVFVFILFKLLT) traverse the membrane as a helical; Signal-anchor for type II membrane protein segment. Residues 24–496 (GSKSTKNSLP…TAYKTANNSA (473 aa)) lie on the Lumenal side of the membrane. C432 contacts heme. A glycan (N-linked (GlcNAc...) asparagine) is linked at N493.

The protein belongs to the cytochrome P450 family. It depends on heme as a cofactor.

It is found in the endoplasmic reticulum membrane. The catalysed reaction is (+)-(R)-germacrene A + 3 reduced [NADPH--hemoprotein reductase] + 3 O2 = germacra-1(10),4,11(13)-trien-12-oate + 3 oxidized [NADPH--hemoprotein reductase] + 4 H2O + 4 H(+). Its pathway is secondary metabolite biosynthesis; terpenoid biosynthesis. Functionally, involved in the biosynthesis of germacrene-derived sesquiterpene lactones. Catalyzes three consecutive oxidations of germacrene A to produce germacrene A acid. Could also catalyze the three-step oxidation of non-natural substrate amorphadiene to artemisinic acid. This is Germacrene A hydroxylase from Barnadesia spinosa (Spiny barnadesia).